The sequence spans 289 residues: Pantothenate synthetase (289 aa).

An ATP-binding site is contributed by 33 to 40 (MGYLHEGH). The active-site Proton donor is H40. Residue Q70 participates in (R)-pantoate binding. Q70 lines the beta-alanine pocket. 157–160 (GEKD) is an ATP binding site. Q163 contacts (R)-pantoate. Residues V186 and 194 to 197 (LSSR) each bind ATP.

This sequence belongs to the pantothenate synthetase family. Homodimer.

It is found in the cytoplasm. The enzyme catalyses (R)-pantoate + beta-alanine + ATP = (R)-pantothenate + AMP + diphosphate + H(+). It participates in cofactor biosynthesis; (R)-pantothenate biosynthesis; (R)-pantothenate from (R)-pantoate and beta-alanine: step 1/1. Its function is as follows. Catalyzes the condensation of pantoate with beta-alanine in an ATP-dependent reaction via a pantoyl-adenylate intermediate. The polypeptide is Pantothenate synthetase (Anaeromyxobacter dehalogenans (strain 2CP-C)).